We begin with the raw amino-acid sequence, 621 residues long: tRNA uridine 5-carboxymethylaminomethyl modification enzyme MnmG (621 aa).

Gly-11–Gly-16 is a binding site for FAD. Gly-270–Phe-284 lines the NAD(+) pocket.

It belongs to the MnmG family. As to quaternary structure, homodimer. Heterotetramer of two MnmE and two MnmG subunits. FAD serves as cofactor.

It localises to the cytoplasm. Functionally, NAD-binding protein involved in the addition of a carboxymethylaminomethyl (cmnm) group at the wobble position (U34) of certain tRNAs, forming tRNA-cmnm(5)s(2)U34. In Helicobacter pylori (strain Shi470), this protein is tRNA uridine 5-carboxymethylaminomethyl modification enzyme MnmG.